The chain runs to 375 residues: Protein arginine N-methyltransferase 6 (375 aa).

The interval 1–38 (MSQPKKRKLESGGGGEGGEGTEEEDGAEREAALERPRR) is disordered. Thr-21 carries the phosphothreonine modification. The span at 28–38 (EREAALERPRR) shows a compositional bias: basic and acidic residues. An asymmetric dimethylarginine; by autocatalysis mark is found at Arg-29, Arg-35, and Arg-37. Positions 44–374 (DQLYYECYSD…EEKTKDFAME (331 aa)) constitute an SAM-dependent MTase PRMT-type domain. S-adenosyl-L-methionine-binding residues include His-57, Arg-66, Gly-90, Glu-112, and Glu-141. Catalysis depends on residues Glu-155 and Glu-164.

The protein belongs to the class I-like SAM-binding methyltransferase superfamily. Protein arginine N-methyltransferase family. PRMT6 subfamily. As to quaternary structure, interacts with EPB41L3 and NCOA1. (Microbial infection) Interacts with (and methylates) HIV-1 Tat, Rev and Nucleocapsid protein p7 (NC). In terms of assembly, (Microbial infection) Interacts with human cytomegalovirus protein UL69. Post-translationally, automethylation enhances its stability and antiretroviral activity. In terms of tissue distribution, highly expressed in kidney and testis.

The protein localises to the nucleus. It carries out the reaction L-arginyl-[protein] + 2 S-adenosyl-L-methionine = N(omega),N(omega)-dimethyl-L-arginyl-[protein] + 2 S-adenosyl-L-homocysteine + 2 H(+). Functionally, arginine methyltransferase that can catalyze the formation of both omega-N monomethylarginine (MMA) and asymmetrical dimethylarginine (aDMA), with a strong preference for the formation of aDMA. Preferentially methylates arginyl residues present in a glycine and arginine-rich domain and displays preference for monomethylated substrates. Specifically mediates the asymmetric dimethylation of histone H3 'Arg-2' to form H3R2me2a. H3R2me2a represents a specific tag for epigenetic transcriptional repression and is mutually exclusive with methylation on histone H3 'Lys-4' (H3K4me2 and H3K4me3). Acts as a transcriptional repressor of various genes such as HOXA2, THBS1 and TP53. Repression of TP53 blocks cellular senescence. Also methylates histone H2A and H4 'Arg-3' (H2AR3me and H4R3me, respectively). Acts as a regulator of DNA base excision during DNA repair by mediating the methylation of DNA polymerase beta (POLB), leading to the stimulation of its polymerase activity by enhancing DNA binding and processivity. Methylates HMGA1. Regulates alternative splicing events. Acts as a transcriptional coactivator of a number of steroid hormone receptors including ESR1, ESR2, PGR and NR3C1. Promotes fasting-induced transcriptional activation of the gluconeogenic program through methylation of the CRTC2 transcription coactivator. May play a role in innate immunity against HIV-1 in case of infection by methylating and impairing the function of various HIV-1 proteins such as Tat, Rev and Nucleocapsid protein p7 (NC). Methylates GPS2, protecting GPS2 from ubiquitination and degradation. Methylates SIRT7, inhibiting SIRT7 histone deacetylase activity and promoting mitochondria biogenesis. This Homo sapiens (Human) protein is Protein arginine N-methyltransferase 6 (PRMT6).